A 435-amino-acid chain; its full sequence is MSTGFFGDIQKVRYEGPESDNPLAFRHYNADEIVLGKRMEDHLRFAVAYWHSFAWEGGDPFGGRTFDRPWFSNEIDAAKLKADVAFEFFSLLGAPYYCFHDADVRPEGRNFAENTRYLNEIVDIFEKKQAETGMKLLWGTANLFSNRRYMAGAATNPDPDVFAFAAATVKTCIDATKRLGGENYVLWGGREGYETLLNTDLSRELDHMGRFLSLVVEYKHKIGFKGTILIEPKPQAPTKHQYDYDVATVYGFLKRYGLENEVKVNIEQGHAILAGHSFEHELALARTLGIFGSIDMNRNDYQSGWDTDQFPNNVPEMALAYYQVLLAGGFTTGGTNFDAKLRRQSLDPQDLLIGHIGGMDCCARGLKASARMLEDGALSKPLDERYAGWNGEFGKRLLSGLSLDQIAGEVEAKDINPQPKSGRQEYLENIVNRYV.

Residues histidine 100 and aspartate 103 contribute to the active site. Mg(2+) contacts are provided by glutamate 231, glutamate 267, histidine 270, aspartate 295, aspartate 306, aspartate 308, and aspartate 338.

The protein belongs to the xylose isomerase family. Homotetramer. It depends on Mg(2+) as a cofactor.

The protein resides in the cytoplasm. It carries out the reaction alpha-D-xylose = alpha-D-xylulofuranose. In Brucella ovis (strain ATCC 25840 / 63/290 / NCTC 10512), this protein is Xylose isomerase.